The following is a 52-amino-acid chain: Large ribosomal subunit protein bL32c (52 aa).

This sequence belongs to the bacterial ribosomal protein bL32 family.

It localises to the plastid. The protein resides in the chloroplast. In Lobularia maritima (Sweet alyssum), this protein is Large ribosomal subunit protein bL32c.